Consider the following 431-residue polypeptide: Glutamyl-tRNA reductase (431 aa).

Substrate is bound by residues 49–52 (TCNR), S109, 114–116 (EGQ), and Q120. C50 (nucleophile) is an active-site residue. NADP(+) is bound at residue 189–194 (GAGKMS).

The protein belongs to the glutamyl-tRNA reductase family. As to quaternary structure, homodimer.

It carries out the reaction (S)-4-amino-5-oxopentanoate + tRNA(Glu) + NADP(+) = L-glutamyl-tRNA(Glu) + NADPH + H(+). It functions in the pathway porphyrin-containing compound metabolism; protoporphyrin-IX biosynthesis; 5-aminolevulinate from L-glutamyl-tRNA(Glu): step 1/2. Its pathway is porphyrin-containing compound metabolism; chlorophyll biosynthesis. In terms of biological role, catalyzes the NADPH-dependent reduction of glutamyl-tRNA(Glu) to glutamate 1-semialdehyde (GSA). This Trichodesmium erythraeum (strain IMS101) protein is Glutamyl-tRNA reductase.